An 811-amino-acid polypeptide reads, in one-letter code: Methionine--tRNA ligase (811 aa).

The 'HIGH' region signature appears at 11–21 (PYVNNVPHLGN). C142, C145, C155, and C158 together coordinate Zn(2+). The 'KMSKS' region motif lies at 344–348 (KFSKS). An ATP-binding site is contributed by K347. Residues 606–640 (GVSVPRTAQMPTGMNKKETDAQQKKEEREMPPPSD) form a disordered region. The segment covering 620–635 (NKKETDAQQKKEEREM) has biased composition (basic and acidic residues). A tRNA-binding domain is found at 648–753 (FSERVVLKVA…PWALPGERAT (106 aa)).

Belongs to the class-I aminoacyl-tRNA synthetase family. MetG type 1 subfamily. As to quaternary structure, homodimer. It depends on Zn(2+) as a cofactor.

The protein resides in the cytoplasm. It catalyses the reaction tRNA(Met) + L-methionine + ATP = L-methionyl-tRNA(Met) + AMP + diphosphate. Is required not only for elongation of protein synthesis but also for the initiation of all mRNA translation through initiator tRNA(fMet) aminoacylation. The polypeptide is Methionine--tRNA ligase (Treponema pallidum (strain Nichols)).